Reading from the N-terminus, the 294-residue chain is uncharacterized protein (294 aa).

This is an uncharacterized protein from Halobacterium salinarum (strain ATCC 700922 / JCM 11081 / NRC-1) (Halobacterium halobium).